A 145-amino-acid polypeptide reads, in one-letter code: Bacilliredoxin SAR1592 (145 aa).

Belongs to the bacilliredoxin family.

This chain is Bacilliredoxin SAR1592, found in Staphylococcus aureus (strain MRSA252).